Consider the following 279-residue polypeptide: Probable endonuclease 4 (279 aa).

Residues H69, H109, E145, D179, H182, H216, D229, H231, and E261 each coordinate Zn(2+).

Belongs to the AP endonuclease 2 family. Zn(2+) serves as cofactor.

It catalyses the reaction Endonucleolytic cleavage to 5'-phosphooligonucleotide end-products.. Endonuclease IV plays a role in DNA repair. It cleaves phosphodiester bonds at apurinic or apyrimidinic (AP) sites, generating a 3'-hydroxyl group and a 5'-terminal sugar phosphate. This is Probable endonuclease 4 from Tolumonas auensis (strain DSM 9187 / NBRC 110442 / TA 4).